The sequence spans 488 residues: Malonate-semialdehyde dehydrogenase (488 aa).

Residues Ala-150, Phe-152, Lys-176, Glu-179, Arg-180, Ser-229, and Thr-251 each contribute to the NAD(+) site. Cys-284 serves as the catalytic Nucleophile. Residue Glu-382 coordinates NAD(+).

This sequence belongs to the aldehyde dehydrogenase family. IolA subfamily. In terms of assembly, homotetramer.

The enzyme catalyses 3-oxopropanoate + NAD(+) + CoA + H2O = hydrogencarbonate + acetyl-CoA + NADH + H(+). The catalysed reaction is 2-methyl-3-oxopropanoate + NAD(+) + CoA + H2O = propanoyl-CoA + hydrogencarbonate + NADH + H(+). It functions in the pathway polyol metabolism; myo-inositol degradation into acetyl-CoA; acetyl-CoA from myo-inositol: step 7/7. In terms of biological role, catalyzes the oxidation of malonate semialdehyde (MSA) and methylmalonate semialdehyde (MMSA) into acetyl-CoA and propanoyl-CoA, respectively. Is involved in a myo-inositol catabolic pathway. Bicarbonate, and not CO2, is the end-product of the enzymatic reaction. The sequence is that of Malonate-semialdehyde dehydrogenase from Listeria innocua serovar 6a (strain ATCC BAA-680 / CLIP 11262).